A 273-amino-acid polypeptide reads, in one-letter code: 4-hydroxy-tetrahydrodipicolinate reductase (273 aa).

NAD(+) contacts are provided by residues 12–17 and E38; that span reads GAGGRM. An NADP(+)-binding site is contributed by R39. NAD(+) is bound by residues 102 to 104 and 126 to 129; these read GTT and AANF. The Proton donor/acceptor role is filled by H159. H160 contacts (S)-2,3,4,5-tetrahydrodipicolinate. Catalysis depends on K163, which acts as the Proton donor. Position 169–170 (169–170) interacts with (S)-2,3,4,5-tetrahydrodipicolinate; it reads GT.

This sequence belongs to the DapB family. In terms of assembly, homotetramer.

It localises to the cytoplasm. The enzyme catalyses (S)-2,3,4,5-tetrahydrodipicolinate + NAD(+) + H2O = (2S,4S)-4-hydroxy-2,3,4,5-tetrahydrodipicolinate + NADH + H(+). The catalysed reaction is (S)-2,3,4,5-tetrahydrodipicolinate + NADP(+) + H2O = (2S,4S)-4-hydroxy-2,3,4,5-tetrahydrodipicolinate + NADPH + H(+). It participates in amino-acid biosynthesis; L-lysine biosynthesis via DAP pathway; (S)-tetrahydrodipicolinate from L-aspartate: step 4/4. Its function is as follows. Catalyzes the conversion of 4-hydroxy-tetrahydrodipicolinate (HTPA) to tetrahydrodipicolinate. The sequence is that of 4-hydroxy-tetrahydrodipicolinate reductase from Shigella boydii serotype 4 (strain Sb227).